The primary structure comprises 374 residues: Glutamate 5-kinase (374 aa).

Lysine 16 is a binding site for ATP. The substrate site is built by serine 56, aspartate 143, and asparagine 155. 175–176 (TD) serves as a coordination point for ATP. The region spanning 282–360 (RGRVVLDAGA…SEIEAVLGYV (79 aa)) is the PUA domain.

Belongs to the glutamate 5-kinase family.

It is found in the cytoplasm. The enzyme catalyses L-glutamate + ATP = L-glutamyl 5-phosphate + ADP. It participates in amino-acid biosynthesis; L-proline biosynthesis; L-glutamate 5-semialdehyde from L-glutamate: step 1/2. Catalyzes the transfer of a phosphate group to glutamate to form L-glutamate 5-phosphate. The polypeptide is Glutamate 5-kinase (Ralstonia nicotianae (strain ATCC BAA-1114 / GMI1000) (Ralstonia solanacearum)).